An 87-amino-acid chain; its full sequence is Protein WFDC11 (87 aa).

The signal sequence occupies residues 1 to 25; the sequence is MVSLMKLWIPMLMTFFCTVLLSVLG.

The protein resides in the secreted. This Homo sapiens (Human) protein is Protein WFDC11 (WFDC11).